We begin with the raw amino-acid sequence, 273 residues long: Type IV secretion system protein PtlF homolog (273 aa).

The N-terminal stretch at 1–20 is a signal peptide; the sequence is MMAARMMAAGLAATALSAHA.

It belongs to the TrbG/VirB9 family.

The protein localises to the cell outer membrane. The polypeptide is Type IV secretion system protein PtlF homolog (ptlF) (Bordetella bronchiseptica (strain ATCC BAA-588 / NCTC 13252 / RB50) (Alcaligenes bronchisepticus)).